Reading from the N-terminus, the 327-residue chain is Vacuolar protein sorting-associated protein 26A (327 aa).

The tract at residues Arg306–Met327 is disordered. At Ser315 the chain carries Phosphoserine. Polar residues predominate over residues Pro316 to Met327.

It belongs to the VPS26 family. Component of the heterotrimeric retromer cargo-selective complex (CSC), also described as vacuolar protein sorting subcomplex (VPS), formed by VPS26 (VPS26A or VPS26B), VPS29 and VPS35. The CSC has a highly elongated structure with VPS26 and VPS29 binding independently at opposite distal ends of VPS35 as central platform. The CSC is believed to associate with variable sorting nexins to form functionally distinct retromer complex variants. The originally described retromer complex (also called SNX-BAR retromer) is a pentamer containing the CSC and a heterodimeric membrane-deforming subcomplex formed between SNX1 or SNX2 and SNX5 or SNX6 (also called SNX-BAR subcomplex); the respective CSC and SNX-BAR subcomplexes associate with low affinity. The CSC associates with SNX3 to form a SNX3-retromer complex. The CSC associates with SNX27, the WASH complex and the SNX-BAR subcomplex to form the SNX27-retromer complex. Interacts with VPS29, VPS35, SNX27. Interacts with SNX1, SNX2, SNX5, SNX6, SNX3, RAB7A, ECPAS, EHD1, WASHC5, SORL1.

The protein localises to the cytoplasm. The protein resides in the endosome membrane. Its subcellular location is the early endosome. Its function is as follows. Acts as a component of the retromer cargo-selective complex (CSC). The CSC is believed to be the core functional component of retromer or respective retromer complex variants acting to prevent missorting of selected transmembrane cargo proteins into the lysosomal degradation pathway. The recruitment of the CSC to the endosomal membrane involves RAB7A and SNX3. The SNX-BAR retromer mediates retrograde transport of cargo proteins from endosomes to the trans-Golgi network (TGN) and is involved in endosome-to-plasma membrane transport for cargo protein recycling. The SNX3-retromer mediates the retrograde endosome-to-TGN transport of WLS distinct from the SNX-BAR retromer pathway. The SNX27-retromer is believed to be involved in endosome-to-plasma membrane trafficking and recycling of a broad spectrum of cargo proteins. The CSC complex seems to act as recruitment hub for other proteins, such as the WASH complex and TBC1D5. Required for retrograde transport of lysosomal enzyme receptor IGF2R. Required to regulate transcytosis of the polymeric immunoglobulin receptor (pIgR-pIgA). Required for the endosomal localization of WASHC2 (indicative for the WASH complex). Required for the endosomal localization of TBC1D5. Mediates retromer cargo recognition of SORL1 and is involved in trafficking of SORL1 implicated in sorting and processing of APP. Involved in retromer-independent lysosomal sorting of F2R. Involved in recycling of ADRB2. Acts redundantly with VSP26B in SNX-27 mediated endocytic recycling of SLC2A1/GLUT1. Enhances the affinity of SNX27 for PDZ-binding motifs in cargo proteins. The sequence is that of Vacuolar protein sorting-associated protein 26A (Vps26a) from Mus musculus (Mouse).